Reading from the N-terminus, the 1082-residue chain is RE1-silencing transcription factor (1082 aa).

The interval 32 to 117 is interaction with SIN3A; the sequence is DLHELSKAEL…SLELSAVEPQ (86 aa). Residues 43–57 form an interaction with SIN3B region; the sequence is APQLIMLANVALTGE. The interval 140–413 is interaction with ZFP90; sequence PVAEDKCRSS…KSKHPTCPSK (274 aa). The segment at 154–176 adopts a C2H2-type 1 zinc-finger fold; sequence FRCKPCQYEAESEEQFVHHIRIH. The interval 196-207 is required for binding to the neuron-restrictive silencer element; that stretch reads SGSSPAEEGEFS. 7 C2H2-type zinc fingers span residues 211–235, 243–265, 271–293, 299–321, 327–350, 356–378, and 384–407; these read IRCD…HHLR, YKCI…LRNH, YTCS…VRTH, YKCE…MRTH, FKCD…RQVH, LNCP…VELH, and FNCP…KSKH. Disordered regions lie at residues 408-809 and 831-1027; these read PTCP…ELSL and SKLL…KAGL. Positions 440–475 are enriched in basic and acidic residues; sequence EKMENEQTKTKGDVSGKKNEKPVKAVGKDASKEKKP. The segment covering 477–497 has biased composition (low complexity); that stretch reads SSVSVVQVTTRTRKSAVAAET. Over residues 581 to 597 the composition is skewed to basic residues; it reads KGTKKTPPKTKTSKKGG. A compositionally biased stretch (polar residues) spans 630-640; it reads VTGSGSSQTEL. Composition is skewed to pro residues over residues 684 to 713 and 729 to 751; these read YPQP…PAPP and KEPP…PPPM. 2 stretches are compositionally biased toward basic and acidic residues: residues 798-807 and 854-864; these read LRKDRAEKEL and NSREETPKDQE. A compositionally biased stretch (polar residues) spans 900-909; sequence RVSSSEQNSA. Residue Ser-950 is modified to Phosphoserine. Positions 985 to 1063 are interaction with RCOR1; sequence EGIHSHDGSD…HLNRHLVNVY (79 aa). The C2H2-type 9 zinc finger occupies 1036 to 1058; it reads FVCIFCDRSFRKEKDYSKHLNRH.

Isoform 1 and isoform 2 form heterodimers. Isoform 2: Forms homodimers and homooligomers; binds to the neuron-restrictive silencer element (NRSE) as monomer. Interacts with SIN3A, SIN3B and RCOR1. Interacts with CDYL. Interacts with EHMT1 and EHMT2 only in the presence of CDYL. Part of a complex containing at least CDYL, REST, WIZ, SETB1, EHMT1 and EHMT2. Interacts (via zinc-finger DNA-binding domain) with ZFP90 (via N- and C-termini); the interaction inhibits REST repressor activity. Interacts (via C2H2-type zinc finger 5) with PRICKLE1. Interacts with FBXW11 and BTRC. Interacts with USP7. In terms of processing, O-glycosylated. Post-translationally, phosphorylated; phosphorylation is required for ubiquitination. Ubiquitinated; ubiquitination is mediated by BTRC and leads to proteasomal degradation in G2 phase. Ubiquitination increases during neuronal differentiation. Deubiquitinated by USP7; leading to its stabilization and promoting the maintenance of neural progenitor cells. Expressed in the hippocampus, including quiescent neuronal progenitor (QNP) cells, transient-amplifying progenitor (TAP) cells, neuroblasts and mature neurons (at protein level). Expressed in embryonic stem cells (at protein level). Expressed in many non-neuronal tissues including the heart and liver. Abundantly expressed in osteoblastic lineage cells. Expressed in the spleen, kidney, blood cells, cortex, neocortex and in the utricle, saccule and organ of Corti of the inner ear. Isoform 2: Expressed in the cortex, neocortex and in the utricle, saccule and organ of Corti of the inner ear.

Its subcellular location is the nucleus. The protein resides in the cytoplasm. Functionally, transcriptional repressor which binds neuron-restrictive silencer element (NRSE) and represses neuronal gene transcription in non-neuronal cells. Restricts the expression of neuronal genes by associating with two distinct corepressors, SIN3A and RCOR1, which in turn recruit histone deacetylase to the promoters of REST-regulated genes. Mediates repression by recruiting the BHC complex at RE1/NRSE sites which acts by deacetylating and demethylating specific sites on histones, thereby acting as a chromatin modifier. Transcriptional repression by REST-CDYL via the recruitment of histone methyltransferase EHMT2 may be important in transformation suppression. Represses the expression of SRRM4 in non-neural cells to prevent the activation of neural-specific splicing events and to prevent production of REST isoform 2. Repressor activity may be inhibited by forming heterodimers with isoform 2, thereby preventing binding to NRSE or binding to corepressors and leading to derepression of target genes. Also maintains repression of neuronal genes in neural stem cells, and allows transcription and differentiation into neurons by dissociation from RE1/NRSE sites of target genes. Thereby is involved in maintaining the quiescent state of adult neural stem cells and preventing premature differentiation into mature neurons. Plays a role in the developmental switch in synaptic NMDA receptor composition during postnatal development, by repressing GRIN2B expression and thereby altering NMDA receptor properties from containing primarily GRIN2B to primarily GRIN2A subunits. Acts as a regulator of osteoblast differentiation. Key repressor of gene expression in hypoxia; represses genes in hypoxia by direct binding to an RE1/NRSE site on their promoter regions. May also function in stress resistance in the brain during aging; possibly by regulating expression of genes involved in cell death and in the stress response. Repressor of gene expression in the hippocampus after ischemia by directly binding to RE1/NRSE sites and recruiting SIN3A and RCOR1 to promoters of target genes, thereby promoting changes in chromatin modifications and ischemia-induced cell death. After ischemia, might play a role in repression of miR-132 expression in hippocampal neurons, thereby leading to neuronal cell death. Its function is as follows. Binds to the 3' region of the neuron-restrictive silencer element (NRSE), with lower affinity than isoform 1. Exhibits weaker repressor activity compared to isoform 1. May negatively regulate the repressor activity of isoform 1 by binding to isoform 1, thereby preventing its binding to NRSE and leading to derepression of target genes. However, in another study, does not appear to be implicated in repressor activity of a NRSE motif-containing reporter construct nor in inhibitory activity on the isoform 1 transcriptional repressor activity. Post-transcriptional inactivation of REST by SRRM4-dependent alternative splicing into isoform 2 is required in mechanosensory hair cells in the inner ear for derepression of neuronal genes, maintenance of hair cells and hearing. This Mus musculus (Mouse) protein is RE1-silencing transcription factor (Rest).